A 149-amino-acid polypeptide reads, in one-letter code: Large ribosomal subunit protein bL9 (149 aa).

Position 89 is an N6-acetyllysine (Lys89).

It belongs to the bacterial ribosomal protein bL9 family.

In terms of biological role, binds to the 23S rRNA. The polypeptide is Large ribosomal subunit protein bL9 (Shigella dysenteriae serotype 1 (strain Sd197)).